A 1178-amino-acid chain; its full sequence is MLEGCILADSRQSKTAASPSPSRPQSSSNNSVPGAPNRVSFAKLREPLEVPGLLDVQTDSFEWLIGSPRWRESAAERGDVNPVGGLEEVLYELSPIEDFSGSMSLSFSDPRFDDVKAPVDECKDKDMTYAAPLFVTAEFINNNTGEIKSQTVFMGDFPMMTEKGTFIINGTERVVVSQLVRSPGVYFDETIDKSTDKTLHSVKVIPSRGAWLEFDVDKRDTVGVRIDRKRRQPVTVLLKALGWTSEQIVERFGFSEIMRSTLEKDNTVGTDEALLDIYRKLRPGEPPTKESAQTLLENLFFKEKRYDLARVGRYKVNKKLGLHVGEPITSSTLTEEDVVATIEYLVRLHEGQTTMTVPGGVEVPVETDDIDHFGNRRLRTVGELIQNQIRVGMSRMERVVRERMTTQDVEAITPQTLINIRPVVAAIKEFFGTSQLSQFMDQNNPLSGLTHKRRLSALGPGGLSRERAGLEVRDVHPSHYGRMCPIETPEGPNIGLIGSLSVYARVNPFGFIETPYRKVVDGVVSDEIVYLTADEEDRHVVAQANSPIDADGRFVEPRVLVRRKAGEVEYVPSSEVDYMDVSPRQMVSVATAMIPFLEHDDANRALMGANMQRQAVPLVRSEAPLVGTGMELRAAIDAGDVVVAEESGVIEEVSADYITVMHDNGTRRTYRMRKFARSNHGTCANQCPIVDAGDRVEAGQVIADGPCTDDGEMALGKNLLVAIMPWEGHNYEDAIILSNRLVEEDVLTSIHIEEHEIDARDTKLGAEEITRDIPNISDEVLADLDERGIVRIGAEVRDGDILVGKVTPKGETELTPEERLLRAIFGEKAREVRDTSLKVPHGESGKVIGIRVFSREDEDELPAGVNELVRVYVAQKRKISDGDKLAGRHGNKGVIGKILPVEDMPFLADGTPVDIILNTHGVPRRMNIGQILETHLGWCAHSGWKVDAAKGVPDWAARLPDELLEAQPNAIVSTPVFDGAQEAELQGLLSCTLPNRDGDVLVDADGKAMLFDGRSGEPFPYPVTVGYMYIMKLHHLVDDKIHARSTGPYSMITQQPLGGKAQFGGQRFGEMECWAMQAYGAAYTLQELLTIKSDDTVGRVKVYEAIVKGENIPEPGIPESFKVLLKELQSLCLNVEVLSSDGAAIELREGEDEDLERAAANLGINLSRNESASVEDLA.

The tract at residues 1 to 37 (MLEGCILADSRQSKTAASPSPSRPQSSSNNSVPGAPN) is disordered. Over residues 18-33 (SPSPSRPQSSSNNSVP) the composition is skewed to low complexity.

The protein belongs to the RNA polymerase beta chain family. In terms of assembly, the RNAP catalytic core consists of 2 alpha, 1 beta, 1 beta' and 1 omega subunit. When a sigma factor is associated with the core the holoenzyme is formed, which can initiate transcription.

The enzyme catalyses RNA(n) + a ribonucleoside 5'-triphosphate = RNA(n+1) + diphosphate. In terms of biological role, DNA-dependent RNA polymerase catalyzes the transcription of DNA into RNA using the four ribonucleoside triphosphates as substrates. The chain is DNA-directed RNA polymerase subunit beta from Mycobacterium tuberculosis (strain CDC 1551 / Oshkosh).